Consider the following 93-residue polypeptide: DNA-binding protein HB1 (93 aa).

Belongs to the bacterial histone-like protein family. In terms of assembly, homodimer.

Histone-like DNA-binding protein which is capable of wrapping DNA to stabilize it, and thus to prevent its denaturation under extreme environmental conditions. This chain is DNA-binding protein HB1 (hup), found in Bifidobacterium longum (strain NCC 2705).